A 264-amino-acid chain; its full sequence is Small ribosomal subunit protein mS23 (264 aa).

The segment at 233–264 (ARTSNPAGSWKDDTTLNTAQEEESTTSENLHF) is disordered.

It belongs to the mitochondrion-specific ribosomal protein mS23 family. As to quaternary structure, component of the mitochondrial small ribosomal subunit. Mature mitochondrial ribosomes consist of a small (37S) and a large (54S) subunit. The 37S subunit contains at least 33 different proteins and 1 molecule of RNA (15S). The 54S subunit contains at least 45 different proteins and 1 molecule of RNA (21S).

The protein localises to the mitochondrion. The polypeptide is Small ribosomal subunit protein mS23 (RSM25) (Saccharomyces cerevisiae (strain YJM789) (Baker's yeast)).